A 248-amino-acid chain; its full sequence is Probable transcriptional regulatory protein Pcar_2335 (248 aa).

It belongs to the TACO1 family.

The protein resides in the cytoplasm. The chain is Probable transcriptional regulatory protein Pcar_2335 from Syntrophotalea carbinolica (strain DSM 2380 / NBRC 103641 / GraBd1) (Pelobacter carbinolicus).